The primary structure comprises 256 residues: DNA repair protein RecO (256 aa).

Belongs to the RecO family.

In terms of biological role, involved in DNA repair and RecF pathway recombination. This is DNA repair protein RecO from Clostridium novyi (strain NT).